A 393-amino-acid chain; its full sequence is S-adenosylmethionine synthase 1 (393 aa).

Glu9 serves as a coordination point for Mg(2+). His15 is a binding site for ATP. Position 43 (Glu43) interacts with K(+). Glu56 and Gln99 together coordinate L-methionine. ATP contacts are provided by residues 167 to 169, 235 to 238, Asp246, 252 to 253, Ala269, Lys273, and Lys277; these read DGK, SGRF, and RK. Residue Asp246 participates in L-methionine binding. Lys277 lines the L-methionine pocket.

It belongs to the AdoMet synthase family. Homotetramer. It depends on Mn(2+) as a cofactor. Mg(2+) is required as a cofactor. Co(2+) serves as cofactor. Requires K(+) as cofactor.

The protein resides in the cytoplasm. It carries out the reaction L-methionine + ATP + H2O = S-adenosyl-L-methionine + phosphate + diphosphate. The protein operates within amino-acid biosynthesis; S-adenosyl-L-methionine biosynthesis; S-adenosyl-L-methionine from L-methionine: step 1/1. Functionally, catalyzes the formation of S-adenosylmethionine from methionine and ATP. The reaction comprises two steps that are both catalyzed by the same enzyme: formation of S-adenosylmethionine (AdoMet) and triphosphate, and subsequent hydrolysis of the triphosphate. In Solanum tuberosum (Potato), this protein is S-adenosylmethionine synthase 1 (METK1).